Reading from the N-terminus, the 279-residue chain is HTH-type transcriptional regulator HdfR (279 aa).

Residues 1–58 form the HTH lysR-type domain; it reads MDTELLKTFLEVSRTRHFGRAAESLYLTQSAVSFRIRQLENQLGVNLFTRHRNNIRLT. Residues 18–37 constitute a DNA-binding region (H-T-H motif); the sequence is FGRAAESLYLTQSAVSFRIR.

This sequence belongs to the LysR transcriptional regulatory family.

Functionally, negatively regulates the transcription of the flagellar master operon flhDC by binding to the upstream region of the operon. This Escherichia coli O7:K1 (strain IAI39 / ExPEC) protein is HTH-type transcriptional regulator HdfR.